A 430-amino-acid chain; its full sequence is ETS domain-containing protein Elk-4 (430 aa).

The segment at residues 5–85 (ITLWQFLLQL…NGQKFVYKFV (81 aa)) is a DNA-binding region (ETS). Over residues 116–127 (SKDVEYGGKERP) the composition is skewed to basic and acidic residues. A disordered region spans residues 116–138 (SKDVEYGGKERPPQPGAKTSSRN). A Glycyl lysine isopeptide (Lys-Gly) (interchain with G-Cter in SUMO2) cross-link involves residue Lys166. Disordered stretches follow at residues 245–279 (TTFN…DIDT) and 292–325 (PENL…KGLE). Over residues 249-272 (PTPPVPSTPLPLKEPPRTPSPPLS) the composition is skewed to pro residues. Residues 299-312 (PKNEDSALPEKDKT) show a composition bias toward basic and acidic residues.

It belongs to the ETS family. In terms of assembly, interacts with SIRT7. In terms of tissue distribution, lung and liver.

Its subcellular location is the nucleus. Functionally, involved in both transcriptional activation and repression. Interaction with SIRT7 leads to recruitment and stabilization of SIRT7 at promoters, followed by deacetylation of histone H3 at 'Lys-18' (H3K18Ac) and subsequent transcription repression. Forms a ternary complex with the serum response factor (SRF). Requires DNA-bound SRF for ternary complex formation and makes extensive DNA contacts to the 5'side of SRF, but does not bind DNA autonomously. This Mus musculus (Mouse) protein is ETS domain-containing protein Elk-4 (Elk4).